We begin with the raw amino-acid sequence, 918 residues long: Nitrate reductase [NADH] (918 aa).

The tract at residues 25-44 is disordered; the sequence is KNGPNHRADSPVRGCNFPNS. C195 is a binding site for Mo-molybdopterin. The region spanning 543 to 618 is the Cytochrome b5 heme-binding domain; that stretch reads SNTYTLSEVK…LEDYRIGELI (76 aa). Residues H578 and H601 each contribute to the heme site. Residues 661-774 enclose the FAD-binding FR-type domain; sequence NEKIPCKLIS…KGPLGHIEYT (114 aa). Residues 714 to 717, 731 to 735, F736, F743, 748 to 750, and T801 contribute to the FAD site; these read RAYT, VVKVY, and IMS.

Belongs to the nitrate reductase family. In terms of assembly, homodimer. It depends on FAD as a cofactor. The cofactor is heme. Mo-molybdopterin serves as cofactor.

The enzyme catalyses nitrite + NAD(+) + H2O = nitrate + NADH + H(+). Nitrate reductase is a key enzyme involved in the first step of nitrate assimilation in plants, fungi and bacteria. The protein is Nitrate reductase [NADH] of Cucurbita maxima (Pumpkin).